We begin with the raw amino-acid sequence, 132 residues long: Histone H2A.2 (132 aa).

Belongs to the histone H2A family. As to quaternary structure, the nucleosome is a histone octamer containing two molecules each of H2A, H2B, H3 and H4 assembled in one H3-H4 heterotetramer and two H2A-H2B heterodimers. The octamer wraps approximately 147 bp of DNA.

It is found in the nucleus. Its subcellular location is the chromosome. In terms of biological role, core component of nucleosome. Nucleosomes wrap and compact DNA into chromatin, limiting DNA accessibility to the cellular machineries which require DNA as a template. Histones thereby play a central role in transcription regulation, DNA repair, DNA replication and chromosomal stability. DNA accessibility is regulated via a complex set of post-translational modifications of histones, also called histone code, and nucleosome remodeling. This chain is Histone H2A.2, found in Leishmania infantum.